A 251-amino-acid polypeptide reads, in one-letter code: 2,3-bisphosphoglycerate-dependent phosphoglycerate mutase (251 aa).

Substrate is bound by residues 8–15 (RHGESLWN), 21–22 (TG), arginine 60, 87–90 (ERHY), lysine 98, 114–115 (RR), and 183–184 (GN). Histidine 9 (tele-phosphohistidine intermediate) is an active-site residue. The active-site Proton donor/acceptor is glutamate 87.

This sequence belongs to the phosphoglycerate mutase family. BPG-dependent PGAM subfamily.

The catalysed reaction is (2R)-2-phosphoglycerate = (2R)-3-phosphoglycerate. Its pathway is carbohydrate degradation; glycolysis; pyruvate from D-glyceraldehyde 3-phosphate: step 3/5. Catalyzes the interconversion of 2-phosphoglycerate and 3-phosphoglycerate. The chain is 2,3-bisphosphoglycerate-dependent phosphoglycerate mutase from Thermoanaerobacter pseudethanolicus (strain ATCC 33223 / 39E) (Clostridium thermohydrosulfuricum).